Reading from the N-terminus, the 334-residue chain is Procathepsin L (334 aa).

The N-terminal stretch at 1–17 (MTPLLLLAVLCLGTALA) is a signal peptide. A propeptide spans 18–113 (TPKFDQTFNA…RLFQEPLMLQ (96 aa)) (activation peptide). Position 122 (Glu-122) interacts with Zn(2+). Disulfide bonds link Cys-135/Cys-178 and Cys-169/Cys-211. The active site involves Cys-138. Zn(2+) contacts are provided by Glu-163, Asp-184, Glu-199, Glu-205, Asp-227, Asp-250, His-253, Asp-273, and Asp-275. An intrachain disulfide couples Cys-269 to Cys-322. Residue His-276 is part of the active site. Positions 289 to 290 (DS) are excised as a propeptide. Asn-300 is an active-site residue.

This sequence belongs to the peptidase C1 family. In terms of assembly, dimer of a heavy and a light chain linked by disulfide bonds. Interacts with Long isoform of CD74/Ii chain; the interaction stabilizes the conformation of mature CTSL. During export along the endocytic pathway, pro-CTSL undergoes several proteolytic cleavages to generate the CTSL single-chain and two-chain mature forms, composed of a heavy chain linked to a light chain by disulfide bonds. Autocleavage; produces the single-chain CTSL after cleavage of the propeptide. The cleavage can be intermolecular. In terms of tissue distribution, both mature cathepsin L1 and procathepsin L are found in the upper epidermis. The lower epidermis predominantly contains procathepsin L. In seminiferous tubules expression is greater at stages VI-VII than at stages IX-XII.

The protein localises to the lysosome. The protein resides in the apical cell membrane. It localises to the cytoplasmic vesicle. Its subcellular location is the secretory vesicle. It is found in the chromaffin granule. The protein localises to the secreted. The protein resides in the extracellular space. It catalyses the reaction Specificity close to that of papain. As compared to cathepsin B, cathepsin L exhibits higher activity toward protein substrates, but has little activity on Z-Arg-Arg-NHMec, and no peptidyl-dipeptidase activity.. With respect to regulation, inhibited by the propeptide produced by autocleavage. Long isoform of CD74/Ii chain stabilizes the conformation of mature CTSL by binding to its active site and serving as a chaperone to help maintain a pool of mature enzyme in endocytic compartments and extracellular space of APCs. IFNG enhances the conversion into the CTSL mature and active form. Inhibited by CST6. Inhibited by the glycopeptide antibiotic teicoplanin. Inhibited by amantadine. In terms of biological role, thiol protease important for the overall degradation of proteins in lysosomes. Plays a critical for normal cellular functions such as general protein turnover, antigen processing and bone remodeling. Involved in the solubilization of cross-linked TG/thyroglobulin and in the subsequent release of thyroid hormone thyroxine (T4) by limited proteolysis of TG/thyroglobulin in the thyroid follicle lumen. In neuroendocrine chromaffin cells secretory vesicles, catalyzes the prohormone proenkephalin processing to the active enkephalin peptide neurotransmitter. In thymus, regulates CD4(+) T cell positive selection by generating the major histocompatibility complex class II (MHCII) bound peptide ligands presented by cortical thymic epithelial cells. Also mediates invariant chain processing in cortical thymic epithelial cells. Major elastin-degrading enzyme at neutral pH. Accumulates as a mature and active enzyme in the extracellular space of antigen presenting cells (APCs) to regulate degradation of the extracellular matrix in the course of inflammation. Secreted form generates endostatin from COL18A1. Critical for cardiac morphology and function. Plays an important role in hair follicle morphogenesis and cycling, as well as epidermal differentiation. Required for maximal stimulation of steroidogenesis by TIMP1. This chain is Procathepsin L, found in Rattus norvegicus (Rat).